The primary structure comprises 256 residues: Small ribosomal subunit protein eS1 (256 aa).

Alanine 2 carries the N-acetylalanine; partial modification.

It belongs to the eukaryotic ribosomal protein eS1 family. As to quaternary structure, component of the small ribosomal subunit. Mature ribosomes consist of a small (40S) and a large (60S) subunit. The 40S subunit contains about 33 different proteins and 1 molecule of RNA (18S). The 60S subunit contains about 49 different proteins and 3 molecules of RNA (25S, 5.8S and 5S).

Its subcellular location is the cytoplasm. This is Small ribosomal subunit protein eS1 from Meyerozyma guilliermondii (strain ATCC 6260 / CBS 566 / DSM 6381 / JCM 1539 / NBRC 10279 / NRRL Y-324) (Yeast).